A 275-amino-acid polypeptide reads, in one-letter code: 3-methyl-2-oxobutanoate hydroxymethyltransferase (275 aa).

2 residues coordinate Mg(2+): aspartate 55 and aspartate 94. Residues aspartate 55–serine 56, aspartate 94, and lysine 123 each bind 3-methyl-2-oxobutanoate. Glutamate 125 contributes to the Mg(2+) binding site. Glutamate 192 acts as the Proton acceptor in catalysis.

The protein belongs to the PanB family. Homodecamer; pentamer of dimers. It depends on Mg(2+) as a cofactor.

The protein resides in the cytoplasm. The enzyme catalyses 3-methyl-2-oxobutanoate + (6R)-5,10-methylene-5,6,7,8-tetrahydrofolate + H2O = 2-dehydropantoate + (6S)-5,6,7,8-tetrahydrofolate. It participates in cofactor biosynthesis; (R)-pantothenate biosynthesis; (R)-pantoate from 3-methyl-2-oxobutanoate: step 1/2. In terms of biological role, catalyzes the reversible reaction in which hydroxymethyl group from 5,10-methylenetetrahydrofolate is transferred onto alpha-ketoisovalerate to form ketopantoate. This Halorhodospira halophila (strain DSM 244 / SL1) (Ectothiorhodospira halophila (strain DSM 244 / SL1)) protein is 3-methyl-2-oxobutanoate hydroxymethyltransferase.